An 818-amino-acid polypeptide reads, in one-letter code: Histone H2A deubiquitinase MYSM1 (818 aa).

Residues 107–158 (SSPVKWTKEEKNLFEQGLATFGRRWTSIARLIGSRSVLQVKNYARHYFKNKC) form the SANT domain. One can recognise an SWIRM domain in the interval 344 to 442 (IKPPDQELEI…FGCEQAIYNR (99 aa)). The MPN domain maps to 548–680 (VKVSCEAMLV…PHPQSQVACL (133 aa)). Zn(2+) contacts are provided by histidine 627, histidine 629, and aspartate 640. Positions 627-640 (HSHPAFDPNPSIRD) match the JAMM motif motif. The LXXLL motif motif lies at 745–749 (LQKLL).

Belongs to the peptidase M67A family. MYSM1 subfamily.

Its subcellular location is the nucleus. In terms of biological role, metalloprotease that specifically deubiquitinates monoubiquitinated histone H2A, a specific tag for epigenetic transcriptional repression, thereby acting as a coactivator. Preferentially deubiquitinates monoubiquitinated H2A in hyperacetylated nucleosomes. Deubiquitination of histone H2A leads to facilitate the phosphorylation and dissociation of histone H1 from the nucleosome. Acts as a coactivator by participating in the initiation and elongation steps of androgen receptor (AR)-induced gene activation. This chain is Histone H2A deubiquitinase MYSM1 (mysm1), found in Xenopus laevis (African clawed frog).